The sequence spans 278 residues: Small ribosomal subunit protein uS2 (278 aa).

Disordered regions lie at residues 216–235 (EAAA…TQWD) and 250–278 (NFAA…EWTN). The segment covering 256 to 278 (ADGNWGATTGGDWAAAGGEEWTN) has biased composition (low complexity).

This sequence belongs to the universal ribosomal protein uS2 family. As to quaternary structure, component of the small ribosomal subunit. Mature ribosomes consist of a small (40S) and a large (60S) subunit. The 40S subunit contains about 33 different proteins and 1 molecule of RNA (18S). The 60S subunit contains about 49 different proteins and 3 molecules of RNA (25S, 5.8S and 5S). Interacts with ribosomal protein S21.

The protein resides in the cytoplasm. Required for the assembly and/or stability of the 40S ribosomal subunit. Required for the processing of the 20S rRNA-precursor to mature 18S rRNA in a late step of the maturation of 40S ribosomal subunits. The protein is Small ribosomal subunit protein uS2 of Monosiga brevicollis (Choanoflagellate).